A 256-amino-acid chain; its full sequence is Pyridoxine 5'-phosphate synthase (256 aa).

Asn-8 and Arg-19 together coordinate 3-amino-2-oxopropyl phosphate. The Proton acceptor role is filled by His-44. The 1-deoxy-D-xylulose 5-phosphate site is built by Arg-46 and His-51. The Proton acceptor role is filled by Glu-74. Thr-111 serves as a coordination point for 1-deoxy-D-xylulose 5-phosphate. His-202 functions as the Proton donor in the catalytic mechanism. 3-amino-2-oxopropyl phosphate is bound by residues Asp-203 and 225–226 (GH).

The protein belongs to the PNP synthase family. Homooctamer; tetramer of dimers.

The protein resides in the cytoplasm. It carries out the reaction 3-amino-2-oxopropyl phosphate + 1-deoxy-D-xylulose 5-phosphate = pyridoxine 5'-phosphate + phosphate + 2 H2O + H(+). It functions in the pathway cofactor biosynthesis; pyridoxine 5'-phosphate biosynthesis; pyridoxine 5'-phosphate from D-erythrose 4-phosphate: step 5/5. Its function is as follows. Catalyzes the complicated ring closure reaction between the two acyclic compounds 1-deoxy-D-xylulose-5-phosphate (DXP) and 3-amino-2-oxopropyl phosphate (1-amino-acetone-3-phosphate or AAP) to form pyridoxine 5'-phosphate (PNP) and inorganic phosphate. This Xanthomonas campestris pv. campestris (strain 8004) protein is Pyridoxine 5'-phosphate synthase.